The sequence spans 220 residues: SAGA-associated factor 11 homolog (220 aa).

The interval 1–38 is disordered; it reads MSTGTANSAVSSKSTNSTTSTSKVPVNEKSNNSQNANT. The segment at 126–147 adopts an SGF11-type zinc-finger fold; it reads CTCPNCDRPVSAARFAPHLEKC. Composition is skewed to low complexity over residues 160-177 and 204-220; these read RRLA…SSSS and SQNS…GKTF. The disordered stretch occupies residues 160–220; sequence RRLATKESNS…GSKKNNGKTF (61 aa).

This sequence belongs to the SGF11 family. As to quaternary structure, component of some SAGA transcription coactivator-HAT complexes. Within the SAGA complex, participates in a subcomplex of SAGA called the DUB module (deubiquitination module).

The protein localises to the nucleus. Functionally, component of the transcription regulatory histone acetylation (HAT) complex SAGA, a multiprotein complex that activates transcription by remodeling chromatin and mediating histone acetylation and deubiquitination. Within the SAGA complex, participates in a subcomplex that specifically deubiquitinates histone H2B. The SAGA complex is recruited to specific gene promoters by activators, where it is required for transcription. This chain is SAGA-associated factor 11 homolog, found in Musca domestica (House fly).